Here is a 393-residue protein sequence, read N- to C-terminus: Phosphoglycerate kinase (393 aa).

Substrate is bound by residues 21–23 (DLN), Arg-36, 59–62 (HLGR), Arg-113, and Arg-146. Residues Lys-197, Glu-319, and 345–348 (GGDT) each bind ATP.

This sequence belongs to the phosphoglycerate kinase family. As to quaternary structure, monomer.

The protein resides in the cytoplasm. The catalysed reaction is (2R)-3-phosphoglycerate + ATP = (2R)-3-phospho-glyceroyl phosphate + ADP. It participates in carbohydrate degradation; glycolysis; pyruvate from D-glyceraldehyde 3-phosphate: step 2/5. The sequence is that of Phosphoglycerate kinase from Nitratidesulfovibrio vulgaris (strain DSM 19637 / Miyazaki F) (Desulfovibrio vulgaris).